The following is an 81-amino-acid chain: uncharacterized protein (81 aa).

A signal peptide spans 1 to 20 (MIDDHEALLLLVLSSGPAAL).

This is an uncharacterized protein from Treponema pallidum (strain Nichols).